A 213-amino-acid chain; its full sequence is Heat shock protein 30C (213 aa).

Over residues 61-80 (SKDTEMRRITDQNRQSRESE) the composition is skewed to basic and acidic residues. Disordered stretches follow at residues 61-93 (SKDT…GKDH) and 174-213 (ALPP…QKVD). Positions 76–188 (SRESEGTSPN…PETPIPISMD (113 aa)) constitute a sHSP domain.

The protein belongs to the small heat shock protein (HSP20) family.

The polypeptide is Heat shock protein 30C (hsp30c) (Xenopus laevis (African clawed frog)).